Consider the following 739-residue polypeptide: Eukaryotic translation initiation factor 3 subunit B (739 aa).

In terms of domain architecture, RRM spans 39 to 125; sequence AFVVIDGLPV…HTLAVNKLTD (87 aa). WD repeat units lie at residues 191–229, 231–288, 457–498, 516–559, and 574–612; these read RDHWTQLFVQWSPLGTYLASVHPQGVQLWGGPQFGKQKQ, PHPF…RSFV, SLKD…SFFA, IEKK…EKPE, and NEHFGVTDIDWDPTGRYVVSSASAWTHSLENGYHIHTFS.

The protein belongs to the eIF-3 subunit B family. Component of the eukaryotic translation initiation factor 3 (eIF-3) complex.

The protein localises to the cytoplasm. Its function is as follows. RNA-binding component of the eukaryotic translation initiation factor 3 (eIF-3) complex, which is involved in protein synthesis of a specialized repertoire of mRNAs and, together with other initiation factors, stimulates binding of mRNA and methionyl-tRNAi to the 40S ribosome. The eIF-3 complex specifically targets and initiates translation of a subset of mRNAs involved in cell proliferation. The chain is Eukaryotic translation initiation factor 3 subunit B from Coccidioides immitis (strain RS) (Valley fever fungus).